A 284-amino-acid polypeptide reads, in one-letter code: uncharacterized protein (284 aa).

Residues 1–10 (MSNSVTNFEM) are compositionally biased toward polar residues. The interval 1 to 28 (MSNSVTNFEMSSVLPGKKPCQGKNNESQ) is disordered.

This is an uncharacterized protein from Escherichia coli (strain K12).